The sequence spans 177 residues: Adenine phosphoribosyltransferase (177 aa).

This sequence belongs to the purine/pyrimidine phosphoribosyltransferase family. In terms of assembly, homodimer.

The protein localises to the cytoplasm. It carries out the reaction AMP + diphosphate = 5-phospho-alpha-D-ribose 1-diphosphate + adenine. It functions in the pathway purine metabolism; AMP biosynthesis via salvage pathway; AMP from adenine: step 1/1. In terms of biological role, catalyzes a salvage reaction resulting in the formation of AMP, that is energically less costly than de novo synthesis. This is Adenine phosphoribosyltransferase from Mycoplasma pneumoniae (strain ATCC 29342 / M129 / Subtype 1) (Mycoplasmoides pneumoniae).